Reading from the N-terminus, the 117-residue chain is Ig heavy chain V region 102 (117 aa).

An N-terminal signal peptide occupies residues 1–19; it reads MGWSCIILFLVATATGVHS. The tract at residues 20–49 is framework-1; it reads HVQLQQPGAELVKPGASVKVSCKASGYTFT. A disulfide bridge connects residues C41 and C115. The segment at 50 to 54 is complementarity-determining-1; the sequence is SYWMH. The framework-2 stretch occupies residues 55 to 68; sequence WVKQRPGQGLEWIG. Positions 69–85 are complementarity-determining-2; the sequence is RIHPSDSDTNYNQKFKG. The interval 86 to 117 is framework-3; sequence KATLTVDKSSSTAYMQLSSLTSEDSAVYYCAI.

The sequence is that of Ig heavy chain V region 102 from Mus musculus (Mouse).